We begin with the raw amino-acid sequence, 243 residues long: Ubiquinone/menaquinone biosynthesis C-methyltransferase UbiE (243 aa).

Residues threonine 69, aspartate 90, and 116–117 (DA) each bind S-adenosyl-L-methionine.

The protein belongs to the class I-like SAM-binding methyltransferase superfamily. MenG/UbiE family.

The catalysed reaction is a 2-demethylmenaquinol + S-adenosyl-L-methionine = a menaquinol + S-adenosyl-L-homocysteine + H(+). It catalyses the reaction a 2-methoxy-6-(all-trans-polyprenyl)benzene-1,4-diol + S-adenosyl-L-methionine = a 5-methoxy-2-methyl-3-(all-trans-polyprenyl)benzene-1,4-diol + S-adenosyl-L-homocysteine + H(+). Its pathway is quinol/quinone metabolism; menaquinone biosynthesis; menaquinol from 1,4-dihydroxy-2-naphthoate: step 2/2. The protein operates within cofactor biosynthesis; ubiquinone biosynthesis. In terms of biological role, methyltransferase required for the conversion of demethylmenaquinol (DMKH2) to menaquinol (MKH2) and the conversion of 2-polyprenyl-6-methoxy-1,4-benzoquinol (DDMQH2) to 2-polyprenyl-3-methyl-6-methoxy-1,4-benzoquinol (DMQH2). The chain is Ubiquinone/menaquinone biosynthesis C-methyltransferase UbiE from Ralstonia pickettii (strain 12J).